The primary structure comprises 616 residues: Dihydroxy-acid dehydratase (616 aa).

Mg(2+) is bound at residue Asp81. Residue Cys122 participates in [2Fe-2S] cluster binding. Asp123 and Lys124 together coordinate Mg(2+). An N6-carboxylysine modification is found at Lys124. Cys195 is a [2Fe-2S] cluster binding site. Glu491 serves as a coordination point for Mg(2+). Ser517 (proton acceptor) is an active-site residue.

This sequence belongs to the IlvD/Edd family. As to quaternary structure, homodimer. [2Fe-2S] cluster is required as a cofactor. Mg(2+) serves as cofactor.

It carries out the reaction (2R)-2,3-dihydroxy-3-methylbutanoate = 3-methyl-2-oxobutanoate + H2O. It catalyses the reaction (2R,3R)-2,3-dihydroxy-3-methylpentanoate = (S)-3-methyl-2-oxopentanoate + H2O. Its pathway is amino-acid biosynthesis; L-isoleucine biosynthesis; L-isoleucine from 2-oxobutanoate: step 3/4. It functions in the pathway amino-acid biosynthesis; L-valine biosynthesis; L-valine from pyruvate: step 3/4. Functionally, functions in the biosynthesis of branched-chain amino acids. Catalyzes the dehydration of (2R,3R)-2,3-dihydroxy-3-methylpentanoate (2,3-dihydroxy-3-methylvalerate) into 2-oxo-3-methylpentanoate (2-oxo-3-methylvalerate) and of (2R)-2,3-dihydroxy-3-methylbutanoate (2,3-dihydroxyisovalerate) into 2-oxo-3-methylbutanoate (2-oxoisovalerate), the penultimate precursor to L-isoleucine and L-valine, respectively. The sequence is that of Dihydroxy-acid dehydratase from Salmonella agona (strain SL483).